The sequence spans 149 residues: Protein cornichon homolog 2 (149 aa).

3 consecutive transmembrane segments (helical) span residues 3-23 (IELI…GLTA), 59-79 (ALCA…MAPV), and 117-137 (YFSL…TLFI).

This sequence belongs to the cornichon family.

The protein resides in the endoplasmic reticulum membrane. It localises to the golgi apparatus membrane. In terms of biological role, acts as a cargo receptor necessary for the transportation of secretory proteins from the endoplasmic reticulum (ER) in COPII-coated vesicles targeted to the Golgi apparatus. The sequence is that of Protein cornichon homolog 2 from Oryza sativa subsp. japonica (Rice).